Here is a 977-residue protein sequence, read N- to C-terminus: Glutamate receptor 2 (977 aa).

Residues 1-19 form the signal peptide; it reads MNKNLLVFGFLIFVKIGET. At 20-621 the chain is on the extracellular side; the sequence is SKKFPLRAFV…FSFMEPLGMT (602 aa). N36, N227, N291, N427, N532, and N566 each carry an N-linked (GlcNAc...) asparagine glycan. A helical membrane pass occupies residues 622 to 642; sequence IWIFTLSSYFGVSLTIFLVSW. The Cytoplasmic portion of the chain corresponds to 643-695; the sequence is FSPYEKRIEFKRGEFTVTNEFTLYNSLWFTLAAFMQQGTDILPRAVSGRIASS. The helical transmembrane segment at 696 to 716 threads the bilayer; that stretch reads CWWFFTLIIVSSYTANLAAFL. Residues 717-898 lie on the Extracellular side of the membrane; sequence TLERMTPPIE…GTSSSLNLSK (182 aa). N-linked (GlcNAc...) asparagine glycosylation is found at N783 and N895. A helical membrane pass occupies residues 899–919; it reads VAGIFYILLAGMVLSMCTALV. The Cytoplasmic portion of the chain corresponds to 920 to 977; the sequence is EFLFRKNKENREKERNRMRSSRPLKPGILASCERAKQKQLQNRRTKSEEVSTPRSTLF. Positions 954–977 are disordered; it reads AKQKQLQNRRTKSEEVSTPRSTLF.

It belongs to the glutamate-gated ion channel (TC 1.A.10.1) family. As to expression, command interneurons of the locomotory control circuit (AIA, AIB, AVA, AVD, AVE, PVC, RIA, RIG and RIR) and motor neurons (AVG, M1, RMDD and RMDV).

The protein localises to the membrane. The protein resides in the postsynaptic cell membrane. Its function is as follows. L-glutamate acts as an excitatory neurotransmitter at many synapses in the central nervous system. The postsynaptic actions of glutamate are mediated by a variety of receptors that are named according to their selective agonists. Required for response to mechanical and osmotic stimuli. In Caenorhabditis elegans, this protein is Glutamate receptor 2 (glr-2).